Reading from the N-terminus, the 1436-residue chain is Pleiotropic drug resistance protein 1 (1436 aa).

Positions 165–438 (LDSIHILPSK…FESMGFKCPE (274 aa)) constitute an ABC transporter 1 domain. 198–205 (GPPGSGKT) is a binding site for ATP. The 214-residue stretch at 516–729 (QLLKVCTERE…SVNAILVNEF (214 aa)) folds into the ABC transmembrane type-2 1 domain. 7 helical membrane passes run 534-554 (FVYL…MTIF), 567-587 (GGIY…NGLS), 622-642 (IPVT…VMGF), 653-673 (FLLL…IAAV), 679-699 (VAST…GFIL), 707-727 (WWIW…ILVN), and 764-784 (IGVG…SVAL). A disordered region spans residues 796 to 826 (TISDESENNESESSPQITSTQEGDSASENKK). A compositionally biased stretch (polar residues) spans 810-821 (PQITSTQEGDSA). The ABC transporter 2 domain maps to 838 to 1090 (ITFDEVVYSV…HLIKYFESIP (253 aa)). 883-890 (GVSGAGKT) is an ATP binding site. The region spanning 1163-1377 (TQCMACLWKQ…TLYGLVASQF (215 aa)) is the ABC transmembrane type-2 2 domain. The next 7 helical transmembrane spans lie at 1184–1204 (AVRL…FWDI), 1214–1234 (LVNA…QNSS), 1270–1290 (IPYI…MIGF), 1301–1321 (FFFM…TVAV), 1327–1347 (VASI…GFIV), 1358–1378 (WYYW…SQFG), and 1408–1428 (VVAA…ALGI).

Belongs to the ABC transporter superfamily. ABCG family. PDR (TC 3.A.1.205) subfamily. In terms of tissue distribution, roots, petals and leaf epidermis, where it is confined to glandular trichomes (at protein level).

It is found in the cell membrane. In terms of biological role, excretes secondary metabolites such as terpenes. Involved in both constitutive and jasmonic acid-dependent induced defense. Confers some resistance to sclareol and B.cinerea. The chain is Pleiotropic drug resistance protein 1 (PDR1) from Nicotiana plumbaginifolia (Leadwort-leaved tobacco).